The sequence spans 732 residues: MAP7 domain-containing protein 2 (732 aa).

Position 1 is an N-acetylmethionine (M1). Residues 1–10 are compositionally biased toward gly residues; sequence MERGGGGSGT. 5 disordered regions span residues 1-64, 95-123, 157-186, 210-244, and 279-509; these read MERG…RREE, WRKLEEQRQREDQKRAAVEEKRKQKLREE, PGGHDACDKLSTSTMSLPKPTEPPMNKRLS, GPLNPSYKSSPTRNIEKKKATSTSTSGAGDVGKEA, and EFSG…KQKE. The segment covering 49-64 has biased composition (basic and acidic residues); the sequence is LKSDERQRLAKERREE. Residues 51–146 are a coiled coil; sequence SDERQRLAKE…RTQQLELKKK (96 aa). Residues 329–345 show a composition bias toward basic and acidic residues; it reads MPKRKAEKEKSNKEREG. Residues 347–357 are compositionally biased toward low complexity; sequence LAQQAAGPQGE. Residues 359–374 show a composition bias toward basic and acidic residues; the sequence is ALEKHVVDKHASEKHA. Positions 375–386 are enriched in low complexity; that stretch reads AAAGGKAENSAA. Basic and acidic residues predominate over residues 404 to 509; the sequence is LAEKRRQARL…EKAMIEKQKE (106 aa).

It belongs to the MAP7 family. As to quaternary structure, interacts (via N-terminus) with microtubules; facilitates microtubule stabilization. Interacts with kinesin-1 family members, KIF5A, KIF5B and KIF5C.

The protein localises to the cytoplasm. The protein resides in the cytoskeleton. It localises to the microtubule organizing center. It is found in the centrosome. Its subcellular location is the midbody. The protein localises to the cell projection. The protein resides in the neuron projection. It localises to the axon. Microtubule-stabilizing protein that plays a role in the control of cell motility and neurite outgrowth via direct binding to the microtubule. Acts as a critical cofactor for kinesin transport. In the proximal axon, regulates kinesin-1 family members, KIF5A, KIF5B and KIF5C recruitment to microtubules and contributes to kinesin-1-mediated transport in the axons. This Homo sapiens (Human) protein is MAP7 domain-containing protein 2 (MAP7D2).